The primary structure comprises 170 residues: Cathelicidin antimicrobial peptide (170 aa).

The first 30 residues, 1-30 (MKTQRDSPSLGRWSLVLLLLGLVMPLAIVA), serve as a signal peptide directing secretion. Residues 31–131 (QVLSYQEAVL…DISCDKDNRR (101 aa)) constitute a propeptide, cathelin-like domain (CLD). Disulfide bonds link Cys-86–Cys-97 and Cys-108–Cys-125. The tract at residues 150 to 162 (LKKVGQKIKDFLG) is active core.

It belongs to the cathelicidin family. In terms of assembly, monomer, homodimer or homotrimer (in vitro). Oligomerizes as tetra- or hexamer in solution (in vitro). In terms of processing, proteolytically cleaved by proteinase PRTN3 into antibacterial peptide LL-37. Proteolytically cleaved by cathepsin CTSG and neutrophil elastase ELANE. Resistant to proteolytic degradation in solution, and when bound to both zwitterionic (mimicking mammalian membranes) and negatively charged membranes (mimicking bacterial membranes). Post-translationally, after secretion onto the skin surface, the CAMP gene product is processed by a serine protease-dependent mechanism into multiple novel antimicrobial peptides distinct from and shorter than cathelicidin LL-37. These peptides show enhanced antimicrobial action, acquiring the ability to kill skin pathogens such as S.aureus, E.coli and C.albicans. These peptides have lost the ability to stimulate CXCL8/IL8 release from keratinocytes. The peptides act synergistically, killing bacteria at lower concentrations when present together, and maintain activity at increased salt condition.

The protein resides in the secreted. It is found in the vesicle. In terms of biological role, antimicrobial protein that is an integral component of the innate immune system. Binds to bacterial lipopolysaccharides (LPS). Acts via neutrophil N-formyl peptide receptors to enhance the release of CXCL2. Postsecretory processing generates multiple cathelicidin antimicrobial peptides with various lengths which act as a topical antimicrobial defense in sweat on skin. The unprocessed precursor form, cathelicidin antimicrobial peptide, inhibits the growth of Gram-negative E.coli and E.aerogenes with efficiencies comparable to that of the mature peptide LL-37 (in vitro). Antimicrobial peptide that is an integral component of the innate immune system. Binds to bacterial lipopolysaccharides (LPS). Causes membrane permeabilization by forming transmembrane pores (in vitro). Causes lysis of E.coli. Exhibits antimicrobial activity against Gram-negative bacteria such as P.aeruginosa, S.typhimurium, E.aerogenes, E.coli and P.syringae, Gram-positive bacteria such as L.monocytogenes, S.epidermidis, S.pyogenes and S.aureus, as well as vancomycin-resistant enterococci (in vitro). Exhibits antimicrobial activity against methicillin-resistant S.aureus, P.mirabilis, and C.albicans in low-salt media, but not in media containing 100 mM NaCl (in vitro). Forms chiral supramolecular assemblies with quinolone signal (PQS) molecules of P.aeruginosa, which may lead to interference of bacterial quorum signaling and perturbance of bacterial biofilm formation. May form supramolecular fiber-like assemblies on bacterial membranes. Induces cytokine and chemokine producation as well as TNF/TNFA and CSF2/GMCSF production in normal human keratinocytes. Exhibits hemolytic activity against red blood cells. Functionally, exhibits antimicrobial activity against E.coli and B.megaterium (in vitro). This chain is Cathelicidin antimicrobial peptide, found in Papio papio (Guinea baboon).